The primary structure comprises 103 residues: Small ribosomal subunit protein eS25 (103 aa).

The interval 1-23 (MGGEDMAKKKAPSAKEGEKQQGF) is disordered.

Belongs to the eukaryotic ribosomal protein eS25 family.

The chain is Small ribosomal subunit protein eS25 (rps25e) from Aeropyrum pernix (strain ATCC 700893 / DSM 11879 / JCM 9820 / NBRC 100138 / K1).